Reading from the N-terminus, the 1201-residue chain is DNA-directed RNA polymerase subunit beta' (1201 aa).

4 residues coordinate Zn(2+): Cys-60, Cys-62, Cys-75, and Cys-78. Asp-449, Asp-451, and Asp-453 together coordinate Mg(2+). Residues Cys-818, Cys-892, Cys-899, and Cys-902 each coordinate Zn(2+).

This sequence belongs to the RNA polymerase beta' chain family. The RNAP catalytic core consists of 2 alpha, 1 beta, 1 beta' and 1 omega subunit. When a sigma factor is associated with the core the holoenzyme is formed, which can initiate transcription. It depends on Mg(2+) as a cofactor. Zn(2+) serves as cofactor.

The enzyme catalyses RNA(n) + a ribonucleoside 5'-triphosphate = RNA(n+1) + diphosphate. Its function is as follows. DNA-dependent RNA polymerase catalyzes the transcription of DNA into RNA using the four ribonucleoside triphosphates as substrates. In Listeria innocua serovar 6a (strain ATCC BAA-680 / CLIP 11262), this protein is DNA-directed RNA polymerase subunit beta'.